Consider the following 323-residue polypeptide: Beta-ketoacyl-[acyl-carrier-protein] synthase III (323 aa).

Catalysis depends on residues C113 and H250. The ACP-binding stretch occupies residues 251-255 (QANRR). N280 is an active-site residue.

The protein belongs to the thiolase-like superfamily. FabH family. As to quaternary structure, homodimer.

It is found in the cytoplasm. The enzyme catalyses malonyl-[ACP] + acetyl-CoA + H(+) = 3-oxobutanoyl-[ACP] + CO2 + CoA. It functions in the pathway lipid metabolism; fatty acid biosynthesis. Its function is as follows. Catalyzes the condensation reaction of fatty acid synthesis by the addition to an acyl acceptor of two carbons from malonyl-ACP. Catalyzes the first condensation reaction which initiates fatty acid synthesis and may therefore play a role in governing the total rate of fatty acid production. Possesses both acetoacetyl-ACP synthase and acetyl transacylase activities. Its substrate specificity determines the biosynthesis of branched-chain and/or straight-chain of fatty acids. In Sinorhizobium medicae (strain WSM419) (Ensifer medicae), this protein is Beta-ketoacyl-[acyl-carrier-protein] synthase III.